A 106-amino-acid polypeptide reads, in one-letter code: Nucleoid-associated protein DP1429 (106 aa).

This sequence belongs to the YbaB/EbfC family. As to quaternary structure, homodimer.

It is found in the cytoplasm. The protein localises to the nucleoid. Binds to DNA and alters its conformation. May be involved in regulation of gene expression, nucleoid organization and DNA protection. The protein is Nucleoid-associated protein DP1429 of Desulfotalea psychrophila (strain LSv54 / DSM 12343).